Consider the following 263-residue polypeptide: 3-methyl-2-oxobutanoate hydroxymethyltransferase 2 (263 aa).

Residues aspartate 45 and aspartate 84 each contribute to the Mg(2+) site. Residues 45 to 46, aspartate 84, and lysine 112 each bind 3-methyl-2-oxobutanoate; that span reads DS. Glutamate 114 is a binding site for Mg(2+). Glutamate 181 (proton acceptor) is an active-site residue.

It belongs to the PanB family. In terms of assembly, homodecamer; pentamer of dimers. It depends on Mg(2+) as a cofactor.

Its subcellular location is the cytoplasm. It carries out the reaction 3-methyl-2-oxobutanoate + (6R)-5,10-methylene-5,6,7,8-tetrahydrofolate + H2O = 2-dehydropantoate + (6S)-5,6,7,8-tetrahydrofolate. Its pathway is cofactor biosynthesis; (R)-pantothenate biosynthesis; (R)-pantoate from 3-methyl-2-oxobutanoate: step 1/2. In terms of biological role, catalyzes the reversible reaction in which hydroxymethyl group from 5,10-methylenetetrahydrofolate is transferred onto alpha-ketoisovalerate to form ketopantoate. This Aliivibrio fischeri (strain ATCC 700601 / ES114) (Vibrio fischeri) protein is 3-methyl-2-oxobutanoate hydroxymethyltransferase 2.